The following is a 435-amino-acid chain: 3-phosphoshikimate 1-carboxyvinyltransferase (435 aa).

Residues Lys-21, Ser-22, and Arg-26 each contribute to the 3-phosphoshikimate site. A phosphoenolpyruvate-binding site is contributed by Lys-21. Phosphoenolpyruvate contacts are provided by Gly-100 and Arg-128. Residues Ser-171, Ser-172, Gln-173, Ser-199, Asp-313, and Lys-340 each coordinate 3-phosphoshikimate. Gln-173 lines the phosphoenolpyruvate pocket. Residue Asp-313 is the Proton acceptor of the active site. Phosphoenolpyruvate-binding residues include Arg-344, Arg-386, and Lys-412.

This sequence belongs to the EPSP synthase family. As to quaternary structure, monomer.

It is found in the cytoplasm. It carries out the reaction 3-phosphoshikimate + phosphoenolpyruvate = 5-O-(1-carboxyvinyl)-3-phosphoshikimate + phosphate. It functions in the pathway metabolic intermediate biosynthesis; chorismate biosynthesis; chorismate from D-erythrose 4-phosphate and phosphoenolpyruvate: step 6/7. Its function is as follows. Catalyzes the transfer of the enolpyruvyl moiety of phosphoenolpyruvate (PEP) to the 5-hydroxyl of shikimate-3-phosphate (S3P) to produce enolpyruvyl shikimate-3-phosphate and inorganic phosphate. The protein is 3-phosphoshikimate 1-carboxyvinyltransferase of Clostridium novyi (strain NT).